The primary structure comprises 124 residues: Small ribosomal subunit protein bS6 (124 aa).

The protein belongs to the bacterial ribosomal protein bS6 family.

Binds together with bS18 to 16S ribosomal RNA. This Rippkaea orientalis (strain PCC 8801 / RF-1) (Cyanothece sp. (strain PCC 8801)) protein is Small ribosomal subunit protein bS6.